A 233-amino-acid chain; its full sequence is MIVFILLSFAAVLQQSFGRIDIDSQSTRRPEIQNLIVDTHNSYRRSVSPTATNMLKMEWYPEAAANAERWAYQCVYDHSQKYERVLDGIQCGENIYMYSEFRPWTEVMQSWYDEYRNFIFGVGAHPANALIGHYTQIVWYKSYRVGCAIANCPSYPYNYFYVCQYCPAGNFGGQTATPYNSGTTCADCPSACDNGLCTNPCTSENVFTNCNDMVKESGCQDERMKSICPASCF.

The signal sequence occupies residues 1–18; the sequence is MIVFILLSFAAVLQQSFG. One can recognise an SCP domain in the interval 37 to 165; the sequence is VDTHNSYRRS…PYNYFYVCQY (129 aa). Intrachain disulfides connect Cys-74–Cys-152, Cys-91–Cys-166, Cys-147–Cys-163, Cys-185–Cys-192, Cys-188–Cys-197, Cys-210–Cys-228, and Cys-219–Cys-232. The 33-residue stretch at 201–233 folds into the ShKT domain; that stretch reads CTSENVFTNCNDMVKESGCQDERMKSICPASCF.

It belongs to the CRISP family. Expressed by the venom gland.

It is found in the secreted. Its function is as follows. Blocks contraction of smooth muscle elicited by high potassium-induced depolarization, but does not block caffeine-stimulated contraction. May target voltage-gated calcium channels on smooth muscle. The sequence is that of Cysteine-rich venom protein LIO1 from Erythrolamprus poecilogyrus (Water snake).